Here is a 307-residue protein sequence, read N- to C-terminus: 4-hydroxy-3-methylbut-2-enyl diphosphate reductase (307 aa).

C12 provides a ligand contact to [4Fe-4S] cluster. H41 and H74 together coordinate (2E)-4-hydroxy-3-methylbut-2-enyl diphosphate. The dimethylallyl diphosphate site is built by H41 and H74. 2 residues coordinate isopentenyl diphosphate: H41 and H74. C96 is a binding site for [4Fe-4S] cluster. H124 serves as a coordination point for (2E)-4-hydroxy-3-methylbut-2-enyl diphosphate. H124 contacts dimethylallyl diphosphate. H124 provides a ligand contact to isopentenyl diphosphate. E126 serves as the catalytic Proton donor. T165 serves as a coordination point for (2E)-4-hydroxy-3-methylbut-2-enyl diphosphate. [4Fe-4S] cluster is bound at residue C195. The (2E)-4-hydroxy-3-methylbut-2-enyl diphosphate site is built by S223, S224, N225, and S267. The dimethylallyl diphosphate site is built by S223, S224, N225, and S267. Positions 223, 224, 225, and 267 each coordinate isopentenyl diphosphate.

It belongs to the IspH family. Requires [4Fe-4S] cluster as cofactor.

It carries out the reaction isopentenyl diphosphate + 2 oxidized [2Fe-2S]-[ferredoxin] + H2O = (2E)-4-hydroxy-3-methylbut-2-enyl diphosphate + 2 reduced [2Fe-2S]-[ferredoxin] + 2 H(+). The catalysed reaction is dimethylallyl diphosphate + 2 oxidized [2Fe-2S]-[ferredoxin] + H2O = (2E)-4-hydroxy-3-methylbut-2-enyl diphosphate + 2 reduced [2Fe-2S]-[ferredoxin] + 2 H(+). It participates in isoprenoid biosynthesis; dimethylallyl diphosphate biosynthesis; dimethylallyl diphosphate from (2E)-4-hydroxy-3-methylbutenyl diphosphate: step 1/1. Its pathway is isoprenoid biosynthesis; isopentenyl diphosphate biosynthesis via DXP pathway; isopentenyl diphosphate from 1-deoxy-D-xylulose 5-phosphate: step 6/6. Catalyzes the conversion of 1-hydroxy-2-methyl-2-(E)-butenyl 4-diphosphate (HMBPP) into a mixture of isopentenyl diphosphate (IPP) and dimethylallyl diphosphate (DMAPP). Acts in the terminal step of the DOXP/MEP pathway for isoprenoid precursor biosynthesis. In Magnetococcus marinus (strain ATCC BAA-1437 / JCM 17883 / MC-1), this protein is 4-hydroxy-3-methylbut-2-enyl diphosphate reductase.